The sequence spans 344 residues: tRNA N6-adenosine threonylcarbamoyltransferase (344 aa).

His111 and His115 together coordinate Fe cation. Residues 136-140, Asp169, Gly182, and Asn279 contribute to the substrate site; that span reads LVSGG. Asp307 provides a ligand contact to Fe cation.

Belongs to the KAE1 / TsaD family. Fe(2+) serves as cofactor.

The protein localises to the cytoplasm. The catalysed reaction is L-threonylcarbamoyladenylate + adenosine(37) in tRNA = N(6)-L-threonylcarbamoyladenosine(37) in tRNA + AMP + H(+). In terms of biological role, required for the formation of a threonylcarbamoyl group on adenosine at position 37 (t(6)A37) in tRNAs that read codons beginning with adenine. Is involved in the transfer of the threonylcarbamoyl moiety of threonylcarbamoyl-AMP (TC-AMP) to the N6 group of A37, together with TsaE and TsaB. TsaD likely plays a direct catalytic role in this reaction. This Mannheimia succiniciproducens (strain KCTC 0769BP / MBEL55E) protein is tRNA N6-adenosine threonylcarbamoyltransferase.